The primary structure comprises 662 residues: Serine/threonine-protein kinase PTK1/STK1 (662 aa).

The segment at 35–119 (GNKLKKKASL…SSTSRNLSNS (85 aa)) is disordered. The segment covering 50–60 (STSTNDSESSS) has biased composition (low complexity). Composition is skewed to polar residues over residues 61 to 91 (PKLP…SAST) and 98 to 119 (GSST…LSNS). Residues 196-503 (DDENKTIGWG…IDDLFEDPWF (308 aa)) enclose the Protein kinase domain. ATP is bound by residues 202 to 210 (IGWGGSCEV) and lysine 226. Aspartate 329 acts as the Proton acceptor in catalysis. Residues 605–631 (TLTLSEEPPATPAPSAPSAPSARVRGH) form a disordered region.

This sequence belongs to the protein kinase superfamily. Ser/Thr protein kinase family.

It catalyses the reaction L-seryl-[protein] + ATP = O-phospho-L-seryl-[protein] + ADP + H(+). The enzyme catalyses L-threonyl-[protein] + ATP = O-phospho-L-threonyl-[protein] + ADP + H(+). In terms of biological role, essential determinant for low-affinity spermidine transport. The polypeptide is Serine/threonine-protein kinase PTK1/STK1 (PTK1) (Saccharomyces cerevisiae (strain ATCC 204508 / S288c) (Baker's yeast)).